Reading from the N-terminus, the 606-residue chain is Pickpocket protein 28 (606 aa).

The segment at 1–26 is disordered; the sequence is MRTLTESRRRQSGSSGCKKDSESDDD. Transmembrane regions (helical) follow at residues 66–86 and 490–510; these read IFFGLAFVLVVILSVFFISNV and GLLGLFMGFSIFSVIEIFFYI.

It belongs to the amiloride-sensitive sodium channel (TC 1.A.6) family. In terms of tissue distribution, expressed in water-sensing neurons in taste bristles on the proboscis but not in carbonation-sensing taste peg neurons (at protein level). Expressed in the tracheal system.

Its subcellular location is the cell membrane. Its function is as follows. Osmosensitive ion channel that mediates the cellular and behavioral response to water. Plays an essential role in gustatory water reception. Part of a complex that plays a role in tracheal liquid clearance. Probable role in sodium transport. This Drosophila melanogaster (Fruit fly) protein is Pickpocket protein 28 (ppk28).